Here is a 1709-residue protein sequence, read N- to C-terminus: Protein SHORTAGE IN CHIASMATA 1 homolog (1709 aa).

Basic and acidic residues-rich tracts occupy residues 532-542 (PKLQDEDKHSD), 552-568 (DPQK…EGGT), and 1601-1613 (ESFR…DTPS). 2 disordered regions span residues 532-586 (PKLQ…SSFP) and 1566-1662 (KRKA…DPTW).

Belongs to the XPF family. In terms of assembly, interacts (via C-terminus) with PTD. Interacts with ZIP4. As to expression, highly expressed in anthers and pistil during meiosis. Expressed in pollen mother cells (PMCs) during meiosis. Expressed at low levels in roots, shoots, leaves, flowers, and glumes.

The protein localises to the chromosome. The protein resides in the nucleus. It localises to the cytoplasm. It is found in the cell membrane. In terms of biological role, essential for normal crossover (CO) formation during meiosis. Essential component for the formation of class I meiotic COs. Interacts with PTD, another meiotic component, to regulate CO formation, possibly by stabilizing the recombination intermediates during meiosis. SHOC1 and PTD may form transient heterotrimeric or heterotetrameric complexes with HEI10 and/or ZIP4 to promote class I COs formation. Does not seem to be involved in early meiotic recombination steps involving double-strand break (DSB) formation, processing, and single-strand invasion. Does not seem to be involved in homologous pairing or synaptonemal complex (SC) assembly. The sequence is that of Protein SHORTAGE IN CHIASMATA 1 homolog from Oryza sativa subsp. japonica (Rice).